Here is a 545-residue protein sequence, read N- to C-terminus: Chaperonin GroEL (545 aa).

ATP-binding positions include 29-32, K50, 86-90, G413, and D495; these read TLGP and DGTTT.

It belongs to the chaperonin (HSP60) family. Forms a cylinder of 14 subunits composed of two heptameric rings stacked back-to-back. Interacts with the co-chaperonin GroES.

The protein resides in the cytoplasm. It carries out the reaction ATP + H2O + a folded polypeptide = ADP + phosphate + an unfolded polypeptide.. In terms of biological role, together with its co-chaperonin GroES, plays an essential role in assisting protein folding. The GroEL-GroES system forms a nano-cage that allows encapsulation of the non-native substrate proteins and provides a physical environment optimized to promote and accelerate protein folding. This chain is Chaperonin GroEL, found in Borreliella burgdorferi (strain ATCC 35210 / DSM 4680 / CIP 102532 / B31) (Borrelia burgdorferi).